Here is a 214-residue protein sequence, read N- to C-terminus: MAKQIKGILGEKLGMTQVWDENNRVVPVTVVKAGPNVVTQVRTNDSDGYESVQIAFGEIDPRKVNKPLKGHFAKADVTPRRHLVEIRTADASEYTLGQEITAETFEAGVKVDVTGKSKGKGFAGVMKRHNFKGLGAGHGTQRKHRSPGSIGGCATPGRVFKGLRMAGRMGNERVTTQNLTVHAVDAEKGLLLIKGAVPGPNGGLVLVRTAAKGA.

Residues 133 to 154 form a disordered region; the sequence is GLGAGHGTQRKHRSPGSIGGCA.

Belongs to the universal ribosomal protein uL3 family. In terms of assembly, part of the 50S ribosomal subunit. Forms a cluster with proteins L14 and L19.

In terms of biological role, one of the primary rRNA binding proteins, it binds directly near the 3'-end of the 23S rRNA, where it nucleates assembly of the 50S subunit. This chain is Large ribosomal subunit protein uL3, found in Streptomyces avermitilis (strain ATCC 31267 / DSM 46492 / JCM 5070 / NBRC 14893 / NCIMB 12804 / NRRL 8165 / MA-4680).